Here is an 877-residue protein sequence, read N- to C-terminus: Phosphoenolpyruvate carboxylase (877 aa).

Residues His138 and Lys543 contribute to the active site.

This sequence belongs to the PEPCase type 1 family. The cofactor is Mg(2+).

It catalyses the reaction oxaloacetate + phosphate = phosphoenolpyruvate + hydrogencarbonate. Its function is as follows. Forms oxaloacetate, a four-carbon dicarboxylic acid source for the tricarboxylic acid cycle. In Aeromonas salmonicida (strain A449), this protein is Phosphoenolpyruvate carboxylase.